The chain runs to 310 residues: Ribose-phosphate pyrophosphokinase (310 aa).

ATP contacts are provided by residues 34-36 and 93-94; these read DQE and RQ. Mg(2+)-binding residues include H127 and D167. The active site involves K190. D-ribose 5-phosphate-binding positions include R192, D216, and 220 to 224; that span reads DSGGT.

It belongs to the ribose-phosphate pyrophosphokinase family. Class I subfamily. In terms of assembly, homohexamer. It depends on Mg(2+) as a cofactor.

Its subcellular location is the cytoplasm. It catalyses the reaction D-ribose 5-phosphate + ATP = 5-phospho-alpha-D-ribose 1-diphosphate + AMP + H(+). It participates in metabolic intermediate biosynthesis; 5-phospho-alpha-D-ribose 1-diphosphate biosynthesis; 5-phospho-alpha-D-ribose 1-diphosphate from D-ribose 5-phosphate (route I): step 1/1. In terms of biological role, involved in the biosynthesis of the central metabolite phospho-alpha-D-ribosyl-1-pyrophosphate (PRPP) via the transfer of pyrophosphoryl group from ATP to 1-hydroxyl of ribose-5-phosphate (Rib-5-P). This chain is Ribose-phosphate pyrophosphokinase, found in Agrobacterium fabrum (strain C58 / ATCC 33970) (Agrobacterium tumefaciens (strain C58)).